The following is a 345-amino-acid chain: UDP-3-O-acylglucosamine N-acyltransferase (345 aa).

His-248 serves as the catalytic Proton acceptor.

The protein belongs to the transferase hexapeptide repeat family. LpxD subfamily. As to quaternary structure, homotrimer.

The enzyme catalyses a UDP-3-O-[(3R)-3-hydroxyacyl]-alpha-D-glucosamine + a (3R)-hydroxyacyl-[ACP] = a UDP-2-N,3-O-bis[(3R)-3-hydroxyacyl]-alpha-D-glucosamine + holo-[ACP] + H(+). The protein operates within bacterial outer membrane biogenesis; LPS lipid A biosynthesis. Its function is as follows. Catalyzes the N-acylation of UDP-3-O-acylglucosamine using 3-hydroxyacyl-ACP as the acyl donor. Is involved in the biosynthesis of lipid A, a phosphorylated glycolipid that anchors the lipopolysaccharide to the outer membrane of the cell. The chain is UDP-3-O-acylglucosamine N-acyltransferase from Trichodesmium erythraeum (strain IMS101).